A 236-amino-acid chain; its full sequence is Ribonuclease HII (236 aa).

An RNase H type-2 domain is found at 21–214 (RTVAGVDEVG…LDALPRWQHL (194 aa)). 3 residues coordinate a divalent metal cation: Asp27, Glu28, and Asp119.

Belongs to the RNase HII family. It depends on Mn(2+) as a cofactor. Requires Mg(2+) as cofactor.

The protein localises to the cytoplasm. The catalysed reaction is Endonucleolytic cleavage to 5'-phosphomonoester.. In terms of biological role, endonuclease that specifically degrades the RNA of RNA-DNA hybrids. This is Ribonuclease HII from Streptomyces griseus subsp. griseus (strain JCM 4626 / CBS 651.72 / NBRC 13350 / KCC S-0626 / ISP 5235).